The chain runs to 241 residues: Biosynthetic peptidoglycan transglycosylase (241 aa).

Residues 18–38 (GVIGIIALWMAGILIFAFLPV) traverse the membrane as a helical segment.

Belongs to the glycosyltransferase 51 family.

The protein resides in the cell inner membrane. It catalyses the reaction [GlcNAc-(1-&gt;4)-Mur2Ac(oyl-L-Ala-gamma-D-Glu-L-Lys-D-Ala-D-Ala)](n)-di-trans,octa-cis-undecaprenyl diphosphate + beta-D-GlcNAc-(1-&gt;4)-Mur2Ac(oyl-L-Ala-gamma-D-Glu-L-Lys-D-Ala-D-Ala)-di-trans,octa-cis-undecaprenyl diphosphate = [GlcNAc-(1-&gt;4)-Mur2Ac(oyl-L-Ala-gamma-D-Glu-L-Lys-D-Ala-D-Ala)](n+1)-di-trans,octa-cis-undecaprenyl diphosphate + di-trans,octa-cis-undecaprenyl diphosphate + H(+). It participates in cell wall biogenesis; peptidoglycan biosynthesis. In terms of biological role, peptidoglycan polymerase that catalyzes glycan chain elongation from lipid-linked precursors. The protein is Biosynthetic peptidoglycan transglycosylase of Yersinia pestis bv. Antiqua (strain Antiqua).